The primary structure comprises 283 residues: 1-deoxypentalenic acid 11-beta-hydroxylase (283 aa).

Position 117 (R117) interacts with substrate. H135 and D137 together coordinate Fe cation. 2-oxoglutarate contacts are provided by residues 135 to 137 (HQD) and W151. Residue R186 participates in substrate binding. H224 lines the Fe cation pocket. The 2-oxoglutarate site is built by S226 and R238. The disordered stretch occupies residues 251-283 (HRGFNALTPWPESAKDASKGIMSKITGTPTTAE).

It belongs to the PhyH family. It depends on Fe cation as a cofactor. L-ascorbate serves as cofactor.

It carries out the reaction 1-deoxypentalenate + 2-oxoglutarate + O2 = 1-deoxy-11beta-hydroxypentalenate + succinate + CO2. It functions in the pathway antibiotic biosynthesis; pentalenolactone biosynthesis. Its function is as follows. Catalyzes the conversion of 1-deoxypentalenic acid to 11-beta-hydroxy-1-deoxypentalenic acid in the biosynthesis of pentalenolactone antibiotic. The chain is 1-deoxypentalenic acid 11-beta-hydroxylase (pntH) from Streptomyces arenae.